Here is a 199-residue protein sequence, read N- to C-terminus: V-type ATP synthase subunit E (199 aa).

The protein belongs to the V-ATPase E subunit family.

Produces ATP from ADP in the presence of a proton gradient across the membrane. The sequence is that of V-type ATP synthase subunit E from Borrelia garinii subsp. bavariensis (strain ATCC BAA-2496 / DSM 23469 / PBi) (Borreliella bavariensis).